Consider the following 113-residue polypeptide: Large ribosomal subunit protein uL24 (113 aa).

Belongs to the universal ribosomal protein uL24 family. In terms of assembly, part of the 50S ribosomal subunit.

Its function is as follows. One of two assembly initiator proteins, it binds directly to the 5'-end of the 23S rRNA, where it nucleates assembly of the 50S subunit. Functionally, one of the proteins that surrounds the polypeptide exit tunnel on the outside of the subunit. The chain is Large ribosomal subunit protein uL24 from Micrococcus luteus (strain ATCC 4698 / DSM 20030 / JCM 1464 / CCM 169 / CCUG 5858 / IAM 1056 / NBRC 3333 / NCIMB 9278 / NCTC 2665 / VKM Ac-2230) (Micrococcus lysodeikticus).